A 604-amino-acid polypeptide reads, in one-letter code: Serine/threonine-protein phosphatase 2B catalytic subunit A2 (604 aa).

Residues 21 to 48 are disordered; sequence NKTERPQSSTTPIDSKASTVAAANSTAT. Phosphothreonine is present on Thr-31. Over residues 35–48 the composition is skewed to low complexity; sequence SKASTVAAANSTAT. Residues Asp-144, His-146, and Asp-172 each coordinate Fe cation. 2 residues coordinate Zn(2+): Asp-172 and Asn-204. His-205 acts as the Proton donor in catalysis. Zn(2+)-binding residues include His-253 and His-359. The interval 470–497 is disordered; it reads KKLPQAGKSEATPQPATSASPKHASILD. A compositionally biased stretch (polar residues) spans 480-489; it reads ATPQPATSAS. Residues Ser-489 and Ser-520 each carry the phosphoserine modification. The interval 501 to 523 is calmodulin-binding; the sequence is RRKALRNKILAVAKVSRMYSVLR.

Belongs to the PPP phosphatase family. PP-2B subfamily. As to quaternary structure, composed of two components (A and B), the A component is the catalytic subunit and the B component confers calcium sensitivity. Fe(3+) serves as cofactor. It depends on Zn(2+) as a cofactor.

It carries out the reaction O-phospho-L-seryl-[protein] + H2O = L-seryl-[protein] + phosphate. The catalysed reaction is O-phospho-L-threonyl-[protein] + H2O = L-threonyl-[protein] + phosphate. Functionally, calcium-dependent, calmodulin-stimulated protein phosphatase. This subunit may have a role in the calmodulin activation of calcineurin. This is Serine/threonine-protein phosphatase 2B catalytic subunit A2 (CMP2) from Saccharomyces cerevisiae (strain ATCC 204508 / S288c) (Baker's yeast).